We begin with the raw amino-acid sequence, 359 residues long: DNA integrity scanning protein DisA (359 aa).

Residues 7-145 (DPTGRAVLRA…DGRRWVLEDS (139 aa)) form the DAC domain. ATP-binding positions include G74, L92, and 105–109 (TRHRT).

It belongs to the DisA family. In terms of assembly, homooctamer. Mg(2+) serves as cofactor.

The catalysed reaction is 2 ATP = 3',3'-c-di-AMP + 2 diphosphate. In terms of biological role, participates in a DNA-damage check-point. DisA forms globular foci that rapidly scan along the chromosomes searching for lesions. Also has diadenylate cyclase activity, catalyzing the condensation of 2 ATP molecules into cyclic di-AMP (c-di-AMP). c-di-AMP likely acts as a signaling molecule that may couple DNA integrity with a cellular process. The polypeptide is DNA integrity scanning protein DisA (Beutenbergia cavernae (strain ATCC BAA-8 / DSM 12333 / CCUG 43141 / JCM 11478 / NBRC 16432 / NCIMB 13614 / HKI 0122)).